Reading from the N-terminus, the 363-residue chain is Protein TAX-1 (363 aa).

A required for localization to the flagellum and for flagellar motility region spans residues 129–363; sequence RYGNAEEILS…IPFRGVAAEQ (235 aa). TPR repeat units follow at residues 157 to 190 and 199 to 232; these read AELH…LSVM and TFAY…WLKH.

Interacts with TTC29.

Its subcellular location is the cytoplasm. The protein resides in the cytoskeleton. It is found in the flagellum axoneme. In terms of biological role, required for flagellum motility. The chain is Protein TAX-1 from Trypanosoma brucei brucei (strain 927/4 GUTat10.1).